The following is a 180-amino-acid chain: uncharacterized protein (180 aa).

The next 2 membrane-spanning stretches (helical) occupy residues 37-59 and 128-147; these read VLHA…FPSF and AGSA…VLFV.

It is found in the cell membrane. This is an uncharacterized protein from Treponema pallidum (strain Nichols).